Here is a 119-residue protein sequence, read N- to C-terminus: Large ribosomal subunit protein bL20 (119 aa).

It belongs to the bacterial ribosomal protein bL20 family.

Its function is as follows. Binds directly to 23S ribosomal RNA and is necessary for the in vitro assembly process of the 50S ribosomal subunit. It is not involved in the protein synthesizing functions of that subunit. The protein is Large ribosomal subunit protein bL20 of Acinetobacter baumannii (strain SDF).